A 615-amino-acid chain; its full sequence is Probable transporter mch1 (615 aa).

The disordered stretch occupies residues 1–35; that stretch reads MTGSIGQAPAIDKRDFDINRRSSTPHETAAQEDEA. A compositionally biased stretch (basic and acidic residues) spans 11–20; sequence IDKRDFDINR. The helical transmembrane segment at 84–104 threads the bilayer; that stretch reads FVWGVITCLGAGSITAFSLYG. N-linked (GlcNAc...) asparagine glycosylation is present at asparagine 112. Helical transmembrane passes span 120–140, 147–167, 182–202, 218–238, and 261–281; these read EVSIAAGISMYLPVSLAGYLC, PLTLFAGIAFGLGYSLAAFVY, FWVMVVAFIAIGVATCSMYLA, GIILAVPIAAFGLSGMWQSQV, and FLFLAILLLTIGVIGTFALRI. Residue asparagine 329 is glycosylated (N-linked (GlcNAc...) asparagine). 6 helical membrane-spanning segments follow: residues 371 to 391, 428 to 448, 477 to 497, 512 to 532, 538 to 558, and 583 to 603; these read IFLADHTMWWLALGFFLVTGP, IIALTSTIARLLTGSLSDLFA, LAFLIPSALLLSLGFLLLASP, LVGLGYGSIFSLVPIIISVVW, GTNWGIVAMFPAAGAAMWGVI, and FGFWSIGCTFSVWVAIVAWLV.

The protein belongs to the major facilitator superfamily.

It is found in the vacuole membrane. Its function is as follows. Probable transporter. This Emericella nidulans (strain FGSC A4 / ATCC 38163 / CBS 112.46 / NRRL 194 / M139) (Aspergillus nidulans) protein is Probable transporter mch1 (mch1).